A 250-amino-acid polypeptide reads, in one-letter code: tRNA (guanine-N(1)-)-methyltransferase (250 aa).

S-adenosyl-L-methionine-binding positions include glycine 116 and 136-141; that span reads IGDYVL.

It belongs to the RNA methyltransferase TrmD family. As to quaternary structure, homodimer.

It localises to the cytoplasm. It catalyses the reaction guanosine(37) in tRNA + S-adenosyl-L-methionine = N(1)-methylguanosine(37) in tRNA + S-adenosyl-L-homocysteine + H(+). In terms of biological role, specifically methylates guanosine-37 in various tRNAs. The chain is tRNA (guanine-N(1)-)-methyltransferase from Pseudomonas fluorescens (strain SBW25).